Here is a 347-residue protein sequence, read N- to C-terminus: Probable RNA methyltransferase Lcho_2507 (347 aa).

Catalysis depends on E89, which acts as the Proton acceptor. The region spanning L92 to D318 is the Radical SAM core domain. An intrachain disulfide couples C99 to C323. 3 residues coordinate [4Fe-4S] cluster: C106, C110, and C113. Residues G151–E152, S181, S204–H206, and N280 each bind S-adenosyl-L-methionine. C323 acts as the S-methylcysteine intermediate in catalysis.

Belongs to the radical SAM superfamily. RlmN family. [4Fe-4S] cluster is required as a cofactor.

It localises to the cytoplasm. In Leptothrix cholodnii (strain ATCC 51168 / LMG 8142 / SP-6) (Leptothrix discophora (strain SP-6)), this protein is Probable RNA methyltransferase Lcho_2507.